Reading from the N-terminus, the 1390-residue chain is DNA-directed RNA polymerase subunit beta (1390 aa).

A disordered region spans residues 556–576 (KLADQDAENDPDSDLGTKSSN).

It belongs to the RNA polymerase beta chain family. In terms of assembly, the RNAP catalytic core consists of 2 alpha, 1 beta, 1 beta' and 1 omega subunit. When a sigma factor is associated with the core the holoenzyme is formed, which can initiate transcription.

It carries out the reaction RNA(n) + a ribonucleoside 5'-triphosphate = RNA(n+1) + diphosphate. DNA-dependent RNA polymerase catalyzes the transcription of DNA into RNA using the four ribonucleoside triphosphates as substrates. This Mycoplasmoides gallisepticum (strain R(low / passage 15 / clone 2)) (Mycoplasma gallisepticum) protein is DNA-directed RNA polymerase subunit beta.